A 335-amino-acid polypeptide reads, in one-letter code: Dihydroorotate dehydrogenase (quinone) (335 aa).

Residues 58-62 (AGADK) and threonine 82 each bind FMN. Lysine 62 serves as a coordination point for substrate. A substrate-binding site is contributed by 107-111 (NRNGF). The FMN site is built by asparagine 135 and asparagine 168. Asparagine 168 contacts substrate. Serine 171 (nucleophile) is an active-site residue. Position 173 (asparagine 173) interacts with substrate. 2 residues coordinate FMN: lysine 213 and glycine 241. 242–243 (NT) is a binding site for substrate. Residues glycine 264, glycine 293, and 314–315 (YS) each bind FMN.

The protein belongs to the dihydroorotate dehydrogenase family. Type 2 subfamily. As to quaternary structure, monomer. Requires FMN as cofactor.

The protein resides in the cell membrane. It catalyses the reaction (S)-dihydroorotate + a quinone = orotate + a quinol. It participates in pyrimidine metabolism; UMP biosynthesis via de novo pathway; orotate from (S)-dihydroorotate (quinone route): step 1/1. Its function is as follows. Catalyzes the conversion of dihydroorotate to orotate with quinone as electron acceptor. The chain is Dihydroorotate dehydrogenase (quinone) from Actinobacillus pleuropneumoniae serotype 5b (strain L20).